Consider the following 1225-residue polypeptide: DNA-directed RNA polymerase subunit beta' (1225 aa).

Zn(2+)-binding residues include Cys60, Cys62, Cys75, and Cys78. 3 residues coordinate Mg(2+): Asp450, Asp452, and Asp454. 4 residues coordinate Zn(2+): Cys818, Cys892, Cys899, and Cys902.

This sequence belongs to the RNA polymerase beta' chain family. As to quaternary structure, the RNAP catalytic core consists of 2 alpha, 1 beta, 1 beta' and 1 omega subunit. When a sigma factor is associated with the core the holoenzyme is formed, which can initiate transcription. It depends on Mg(2+) as a cofactor. Zn(2+) serves as cofactor.

It catalyses the reaction RNA(n) + a ribonucleoside 5'-triphosphate = RNA(n+1) + diphosphate. Functionally, DNA-dependent RNA polymerase catalyzes the transcription of DNA into RNA using the four ribonucleoside triphosphates as substrates. The chain is DNA-directed RNA polymerase subunit beta' from Streptococcus pneumoniae (strain Hungary19A-6).